Here is a 220-residue protein sequence, read N- to C-terminus: 7-cyano-7-deazaguanine synthase (220 aa).

An ATP-binding site is contributed by 7–17 (LSGGMDSSTLA). Positions 187, 195, 198, and 201 each coordinate Zn(2+).

It belongs to the QueC family. Zn(2+) is required as a cofactor.

The catalysed reaction is 7-carboxy-7-deazaguanine + NH4(+) + ATP = 7-cyano-7-deazaguanine + ADP + phosphate + H2O + H(+). Its pathway is purine metabolism; 7-cyano-7-deazaguanine biosynthesis. Its function is as follows. Catalyzes the ATP-dependent conversion of 7-carboxy-7-deazaguanine (CDG) to 7-cyano-7-deazaguanine (preQ(0)). The polypeptide is 7-cyano-7-deazaguanine synthase (Methanospirillum hungatei JF-1 (strain ATCC 27890 / DSM 864 / NBRC 100397 / JF-1)).